Here is a 427-residue protein sequence, read N- to C-terminus: Methylenetetrahydrofolate--tRNA-(uracil-5-)-methyltransferase TrmFO (427 aa).

8–13 serves as a coordination point for FAD; the sequence is GAGISG.

Belongs to the MnmG family. TrmFO subfamily. It depends on FAD as a cofactor.

The protein resides in the cytoplasm. It carries out the reaction uridine(54) in tRNA + (6R)-5,10-methylene-5,6,7,8-tetrahydrofolate + NADH + H(+) = 5-methyluridine(54) in tRNA + (6S)-5,6,7,8-tetrahydrofolate + NAD(+). The enzyme catalyses uridine(54) in tRNA + (6R)-5,10-methylene-5,6,7,8-tetrahydrofolate + NADPH + H(+) = 5-methyluridine(54) in tRNA + (6S)-5,6,7,8-tetrahydrofolate + NADP(+). Functionally, catalyzes the folate-dependent formation of 5-methyl-uridine at position 54 (M-5-U54) in all tRNAs. In Mycoplasmopsis agalactiae (strain NCTC 10123 / CIP 59.7 / PG2) (Mycoplasma agalactiae), this protein is Methylenetetrahydrofolate--tRNA-(uracil-5-)-methyltransferase TrmFO.